A 195-amino-acid polypeptide reads, in one-letter code: MSIDTKAIEKHIRGILIALGDDPDREGLKETPKRVAKMYEEVFKGMEYSNDDIAEMFNKTFEEDLKESEEDNIVLVKDIEIFSHCEHHLTLMYNMTVAVAYIPNKRLIGLSKIARIADMVSRRLQLQERIGKDIAEIMEKVTASKDIAVIIKGEHGCMTSRGIKKPGALTTTMTLKGRFKNDDSLVTKLMALYKA.

Residues Cys-85, His-88, and Cys-157 each contribute to the Zn(2+) site.

It belongs to the GTP cyclohydrolase I family. As to quaternary structure, toroid-shaped homodecamer, composed of two pentamers of five dimers.

The catalysed reaction is GTP + H2O = 7,8-dihydroneopterin 3'-triphosphate + formate + H(+). The protein operates within cofactor biosynthesis; 7,8-dihydroneopterin triphosphate biosynthesis; 7,8-dihydroneopterin triphosphate from GTP: step 1/1. In Clostridium acetobutylicum (strain ATCC 824 / DSM 792 / JCM 1419 / IAM 19013 / LMG 5710 / NBRC 13948 / NRRL B-527 / VKM B-1787 / 2291 / W), this protein is GTP cyclohydrolase 1.